We begin with the raw amino-acid sequence, 490 residues long: ATP synthase subunit beta, chloroplastic (490 aa).

Residue 170-177 (GGAGVGKT) coordinates ATP.

The protein belongs to the ATPase alpha/beta chains family. F-type ATPases have 2 components, CF(1) - the catalytic core - and CF(0) - the membrane proton channel. CF(1) has five subunits: alpha(3), beta(3), gamma(1), delta(1), epsilon(1). CF(0) has four main subunits: a(1), b(1), b'(1) and c(9-12).

It is found in the plastid. It localises to the chloroplast thylakoid membrane. The catalysed reaction is ATP + H2O + 4 H(+)(in) = ADP + phosphate + 5 H(+)(out). In terms of biological role, produces ATP from ADP in the presence of a proton gradient across the membrane. The catalytic sites are hosted primarily by the beta subunits. The sequence is that of ATP synthase subunit beta, chloroplastic from Cressa truxillensis (Spreading alkaliweed).